A 163-amino-acid chain; its full sequence is Glycine cleavage system H-like protein gcvH5, mitochondrial (163 aa).

A mitochondrion-targeting transit peptide spans 1-23 (MFLFKTTNNLRKSLSNKFFCTRY). The region spanning 50–136 (IGTLGLTENG…MSKGWLCKIK (87 aa)) is the Lipoyl-binding domain.

This sequence belongs to the GcvH family.

It localises to the mitochondrion. This Dictyostelium discoideum (Social amoeba) protein is Glycine cleavage system H-like protein gcvH5, mitochondrial (gcvH5).